The primary structure comprises 438 residues: Malic acid transport protein (438 aa).

Transmembrane regions (helical) follow at residues 37-57 (SWFA…SFPF), 65-85 (IGKI…SCML), 106-126 (LFIA…AIYA), 140-160 (ILYY…FFTI), 172-192 (SPAW…AGAV), 205-225 (VIFG…LFAV), 242-262 (PGMF…INIA), 288-308 (FMAI…MVSF), 321-341 (ACGW…TIEI), and 353-373 (FGHI…YLMV). Residues 390–438 (AHPPPKPNTGVLNPTFPPEKAPASLEKVDTHVTSTGGESDPPSSEHESV) form a disordered region. 6 positions are modified to phosphoserine: Ser-413, Ser-423, Ser-428, Ser-432, Ser-433, and Ser-437.

Belongs to the tellurite-resistance/dicarboxylate transporter (TDT) family.

The protein localises to the membrane. Its function is as follows. Permease for malate and other C4 dicarboxylic acids. The polypeptide is Malic acid transport protein (mae1) (Schizosaccharomyces pombe (strain 972 / ATCC 24843) (Fission yeast)).